Here is a 1581-residue protein sequence, read N- to C-terminus: ATP-binding cassette sub-family C member 8 (1581 aa).

The Extracellular segment spans residues 1–30; that stretch reads MPLAFCGSENHSAAYRVDQGVLNNGCFVDA. C6 and C26 form a disulfide bridge. N10 is a glycosylation site (N-linked (GlcNAc...) asparagine). The helical transmembrane segment at 31–47 threads the bilayer; it reads LNVVPHVFLLFITFPIL. Topologically, residues 48-72 are cytoplasmic; that stretch reads FIGWGSQSSKVHIHHSTWLHFPGHN. The chain crosses the membrane as a helical span at residues 73-89; sequence LRWILTFMLLFVLVCEI. Over 90–106 the chain is Extracellular; sequence AEGILSDGVTESHHLHL. The helical transmembrane segment at 107–123 threads the bilayer; the sequence is YMPAGMAFMAAVTSVVY. Residues 124–136 are Cytoplasmic-facing; sequence YHNIETSNFPKLL. Residues 137 to 153 form a helical membrane-spanning segment; the sequence is IALLVYWTLAFITKTIK. Over 154 to 169 the chain is Extracellular; the sequence is FVKFLDHAIGFSQLRF. A helical transmembrane segment spans residues 170–186; sequence CLTGLLVILYGMLLLVE. The Cytoplasmic portion of the chain corresponds to 187 to 303; it reads VNVIRVRRYI…AFGRRLVLSS (117 aa). The region spanning 299–602 is the ABC transmembrane type-1 1 domain; sequence LVLSSTFRIL…LSSVVRSTVK (304 aa). The chain crosses the membrane as a helical span at residues 304–319; it reads TFRILADLLGFAGPLC. Residues 320–356 are Extracellular-facing; that stretch reads IFGIVDHLGKENDVFQPKTQFLGVYFVSSQEFLANAY. The helical transmembrane segment at 357-372 threads the bilayer; it reads VLAVLLFLALLLQRTF. Residues 373-438 lie on the Cytoplasmic side of the membrane; the sequence is LQASYYVAIE…MWFFFLCPNL (66 aa). The helical transmembrane segment at 439–454 threads the bilayer; the sequence is WAMPVQIIVGVILLYY. Residues 455–460 are Extracellular-facing; it reads ILGVSA. A helical membrane pass occupies residues 461–473; that stretch reads LIGAAVIILLAPV. At 474–541 the chain is on the cytoplasmic side; the sequence is QYFVATKLSQ…SLRAFAIYTS (68 aa). Residues 542 to 557 form a helical membrane-spanning segment; that stretch reads ISIFMNTAIPIAAVLI. The Extracellular portion of the chain corresponds to 558–576; the sequence is TFVGHVSFFKEADFSPSVA. Residues 577–592 traverse the membrane as a helical segment; it reads FASLSLFHILVTPLFL. The Cytoplasmic segment spans residues 593-1012; sequence LSSVVRSTVK…YLSSAGILLL (420 aa). An ABC transporter 1 domain is found at 679–929; the sequence is VQIMGGYFTW…ECQLFEHWKT (251 aa). 4 residues coordinate ATP: W688, G716, S720, and S721. Position 720 (S720) interacts with Mg(2+). Q774 serves as a coordination point for Mg(2+). Residues 935–949 are compositionally biased toward basic and acidic residues; the sequence is DQELEKETVTERKAT. Positions 935-987 are disordered; sequence DQELEKETVTERKATEPPQGLSRAMSSRDGLLQDEEEEEEEAAESEEDDNLSS. Positions 966-984 are enriched in acidic residues; the sequence is LQDEEEEEEEAAESEEDDN. Residues 1012–1306 enclose the ABC transmembrane type-1 2 domain; it reads LSLLVFSQLL…MVRNLADMEL (295 aa). Residues 1013–1030 form a helical membrane-spanning segment; it reads SLLVFSQLLKHMVLVAID. The Extracellular segment spans residues 1031–1066; that stretch reads YWLAKWTDSALTLTPAARNCSLSQECTLDQTVYAMV. The N-linked (GlcNAc...) asparagine glycan is linked to N1049. The helical transmembrane segment at 1067 to 1083 threads the bilayer; the sequence is FTVLCSLGIVLCLVTSV. Residues 1084–1142 are Cytoplasmic-facing; the sequence is TVEWTGLKVAKRLHRSLLNRIILAPMRFFETTPLGSILNRFSSDCNTIDQHIPSTLECL. Residues 1143–1160 traverse the membrane as a helical segment; sequence SRSTLLCVSALAVISYVT. Position 1161 (P1161) is a topological domain, extracellular. The chain crosses the membrane as a helical span at residues 1162–1174; sequence VFLVALLPLAIVC. At 1175–1248 the chain is on the cytoplasmic side; the sequence is YFIQKYFRVA…FLTAANRWLE (74 aa). The helical transmembrane segment at 1249-1264 threads the bilayer; that stretch reads VRMEYIGACVVLIAAV. Residues 1265–1280 are Extracellular-facing; the sequence is TSISNSLHRELSAGLV. Residues 1281–1296 traverse the membrane as a helical segment; it reads GLGLTYALMVSNYLNW. At 1297–1581 the chain is on the cytoplasmic side; it reads MVRNLADMEL…VFASFVRADK (285 aa). The region spanning 1344-1578 is the ABC transporter 2 domain; that stretch reads IQIQNLSVRY…KDSVFASFVR (235 aa). The ADP site is built by T1380, G1381, G1383, K1384, S1385, and S1386. An ATP-binding site is contributed by S1482.

Belongs to the ABC transporter superfamily. ABCC family. Conjugate transporter (TC 3.A.1.208) subfamily. Forms an heterooctamer with KCNJ11; four ABCC8/SUR1 molecules interact with one KCNJ11 homotetramer.

It is found in the cell membrane. Its activity is regulated as follows. KATP channels are regulated by cytoplasmic ATP/ADP ratios; ATP inhibits the channel by closing the pore, while ADP activates the channel. Activated by phosphatidylinositol 4,5-biphosphate (PtdIns(4,5)P2). Regulator subunit of pancreatic ATP-sensitive potassium channel (KATP), playing a major role in the regulation of insulin release. In pancreatic cells, it forms KATP channels with KCNJ11; KCNJ11 forms the channel pore while ABCC8 is required for activation and regulation. This chain is ATP-binding cassette sub-family C member 8 (ABCC8), found in Homo sapiens (Human).